A 438-amino-acid chain; its full sequence is Adenylosuccinate synthetase (438 aa).

GTP contacts are provided by residues 13-19 (GDEGKGK) and 41-43 (GHT). Aspartate 14 functions as the Proton acceptor in the catalytic mechanism. Residues aspartate 14 and glycine 41 each contribute to the Mg(2+) site. IMP contacts are provided by residues 14–17 (DEGK), 39–42 (NAGH), threonine 130, arginine 144, glutamine 225, threonine 240, and arginine 310. Catalysis depends on histidine 42, which acts as the Proton donor. 306–312 (ATTGRLR) provides a ligand contact to substrate. GTP-binding positions include arginine 312, 338–340 (KLD), and 421–423 (STG).

This sequence belongs to the adenylosuccinate synthetase family. In terms of assembly, homodimer. Requires Mg(2+) as cofactor.

It localises to the cytoplasm. The catalysed reaction is IMP + L-aspartate + GTP = N(6)-(1,2-dicarboxyethyl)-AMP + GDP + phosphate + 2 H(+). It functions in the pathway purine metabolism; AMP biosynthesis via de novo pathway; AMP from IMP: step 1/2. Plays an important role in the de novo pathway of purine nucleotide biosynthesis. Catalyzes the first committed step in the biosynthesis of AMP from IMP. The polypeptide is Adenylosuccinate synthetase (Vibrio vulnificus (strain YJ016)).